We begin with the raw amino-acid sequence, 90 residues long: Hypnin-A3 (90 aa).

Lectin specific for core(alpha 1-6)fucosylated N-glycans. Inhibits platelet aggregation. In Hypnea japonica (Japanese red alga), this protein is Hypnin-A3.